A 146-amino-acid chain; its full sequence is Peptide methionine sulfoxide reductase MsrB (146 aa).

A MsrB domain is found at 2–125 (LKKNKDELND…NSAAVQFIPY (124 aa)). Cys114 acts as the Nucleophile in catalysis.

The protein belongs to the MsrB Met sulfoxide reductase family.

It carries out the reaction L-methionyl-[protein] + [thioredoxin]-disulfide + H2O = L-methionyl-(R)-S-oxide-[protein] + [thioredoxin]-dithiol. The protein is Peptide methionine sulfoxide reductase MsrB of Staphylococcus carnosus (strain TM300).